Consider the following 616-residue polypeptide: Sulfite reductase [NADPH] flavoprotein alpha-component (616 aa).

Residues 80–218 form the Flavodoxin-like domain; the sequence is LTIIFASQTG…SAAQWRKQAL (139 aa). Residues 86–91, 133–136, and 169–178 contribute to the FMN site; these read SQTGNA, STNG, and LGDSSYEFFC. The FAD-binding FR-type domain occupies 251–465; it reads QKPYAATLLT…VENNNNFKLP (215 aa). Residues Thr-339, Gly-373, 403–406, 421–423, Tyr-427, and 436–439 each bind FAD; these read RLYS, TVG, and GGAS. NADP(+) contacts are provided by residues 536–537, 542–546, and Asp-578; these read SR and KVYVQ. Tyr-616 provides a ligand contact to FAD.

Belongs to the NADPH-dependent sulphite reductase flavoprotein subunit CysJ family. This sequence in the N-terminal section; belongs to the flavodoxin family. The protein in the C-terminal section; belongs to the flavoprotein pyridine nucleotide cytochrome reductase family. In terms of assembly, alpha(8)-beta(8). The alpha component is a flavoprotein, the beta component is a hemoprotein. FAD is required as a cofactor. FMN serves as cofactor.

It catalyses the reaction hydrogen sulfide + 3 NADP(+) + 3 H2O = sulfite + 3 NADPH + 4 H(+). It participates in sulfur metabolism; hydrogen sulfide biosynthesis; hydrogen sulfide from sulfite (NADPH route): step 1/1. Component of the sulfite reductase complex that catalyzes the 6-electron reduction of sulfite to sulfide. This is one of several activities required for the biosynthesis of L-cysteine from sulfate. The flavoprotein component catalyzes the electron flow from NADPH -&gt; FAD -&gt; FMN to the hemoprotein component. In Vibrio vulnificus (strain CMCP6), this protein is Sulfite reductase [NADPH] flavoprotein alpha-component.